Here is a 351-residue protein sequence, read N- to C-terminus: Histidinol-phosphate aminotransferase (351 aa).

Lysine 221 carries the post-translational modification N6-(pyridoxal phosphate)lysine.

This sequence belongs to the class-II pyridoxal-phosphate-dependent aminotransferase family. Histidinol-phosphate aminotransferase subfamily. In terms of assembly, homodimer. Requires pyridoxal 5'-phosphate as cofactor.

It catalyses the reaction L-histidinol phosphate + 2-oxoglutarate = 3-(imidazol-4-yl)-2-oxopropyl phosphate + L-glutamate. The protein operates within amino-acid biosynthesis; L-histidine biosynthesis; L-histidine from 5-phospho-alpha-D-ribose 1-diphosphate: step 7/9. This is Histidinol-phosphate aminotransferase from Staphylococcus haemolyticus (strain JCSC1435).